Here is a 376-residue protein sequence, read N- to C-terminus: Small ribosomal subunit protein uS11m (376 aa).

Belongs to the universal ribosomal protein uS11 family. Component of the mitochondrial small ribosomal subunit (mt-SSU). Mature N.crassa 74S mitochondrial ribosomes consist of a small (37S) and a large (54S) subunit. The 37S small subunit contains a 16S ribosomal RNA (16S mt-rRNA) and 32 different proteins. The 54S large subunit contains a 23S rRNA (23S mt-rRNA) and 42 different proteins.

The protein resides in the mitochondrion. In terms of biological role, component of the mitochondrial ribosome (mitoribosome), a dedicated translation machinery responsible for the synthesis of mitochondrial genome-encoded proteins, including at least some of the essential transmembrane subunits of the mitochondrial respiratory chain. The mitoribosomes are attached to the mitochondrial inner membrane and translation products are cotranslationally integrated into the membrane. The polypeptide is Small ribosomal subunit protein uS11m (mrps18) (Neurospora crassa (strain ATCC 24698 / 74-OR23-1A / CBS 708.71 / DSM 1257 / FGSC 987)).